The chain runs to 217 residues: GTP-binding protein Rit2 (217 aa).

Residues glycine 27–serine 34, aspartate 74–glutamine 78, and asparagine 133–aspartate 136 each bind GTP.

The protein belongs to the small GTPase superfamily. Ras family. Interacts with PLXNB3. Interacts with AFDN, the C-terminal domain of RALGDS and RLF, but not with RIN1 and PIK3CA. RLF binds exclusively to the active GTP-bound form. Binds calmodulin. Interacts with POU4F1 (via N-terminus); the interaction controls POU4F1 transactivation activity on some neuronal target genes. Expressed in ganglion cell layer (GCL), inner plexiform layer (IPL) and inner nuclear layer (INL) of the retina. Expressed in retinal ganglion cells (RGCs). Expressed in horizontal, bipolar and amacrine cells, but not Mueller glia, of the INL (at protein level). Neuron-specific. Expressed in ganglion cell layer (GCL) and inner plexiform layer (IPL).

It is found in the nucleus. The protein localises to the cell membrane. It carries out the reaction GTP + H2O = GDP + phosphate + H(+). Its activity is regulated as follows. Alternates between an inactive form bound to GDP and an active form bound to GTP. In terms of biological role, binds and exchanges GTP and GDP. Binds and modulates the activation of POU4F1 as gene expression regulator. This chain is GTP-binding protein Rit2 (Rit2), found in Mus musculus (Mouse).